The primary structure comprises 203 residues: MKSKLLRLLIVSMVTILVFSLVGLSKESSTSAKENHTFSGEDYFRGLLFGQGEVGKLISNDLDPKLVKEANSTEGKKLVNDVVKFIKKDQPQYMDELKQSIDSKDPKKLIENMTKADQLIQKYAKKNENVKYSSNKVTPSCGLYAVCVAAGYLYVVGVNAVALQTAAAVTTAVWKYVAKYSSSASNNSDLEAAAAKTLKLIHQ.

Positions 1-32 (MKSKLLRLLIVSMVTILVFSLVGLSKESSTSA) are cleaved as a signal peptide. The propeptide at 33-140 (KENHTFSGED…KYSSNKVTPS (108 aa)) is removed in mature form. A disulfide bridge connects residues Cys-141 and Cys-147. Residues 183–203 (SASNNSDLEAAAAKTLKLIHQ) constitute a propeptide, removed in mature form.

Proprotein probably interacts with chaperone CsaA. Production of active SDP (able to induce SdpI and kill cells) is a multi-step process that requires signal peptide cleavage (probably by SipS or SipT) as well as SdpA and SdpB. The disulfide bond is not required for maximum toxicity.

It is found in the secreted. In terms of biological role, produces a 42-residue extracellular sporulation delaying protein (SDP) that collapses the proton motive force (probably both the membrane potential and pH gradient) across the cell membrane, which leads to autolysis; may form a proton channel. Induces the lysis of other B.subtilis cells that have not entered the sporulation pathway, inducing cannibalism to provide a source of nutrients to support sporulation, and at the same time delaying commitment to the energetically expensive and irreversible onset of sporulation. Addition of SDP to liquid cultures halts growth, leads to increased cell permeability and eventually cell lysis in a significant subset of the population, although some cells survive and resume growth after a lag period. Effects of SDP are irreversible within 10 minutes. Addition of SDP to solid cultures induces killing, it is much more effective than SKF (AC O31422). Has antibiotic action against Gram-positive Firmicutes (L.acidophilus, M.megaterium, P.polymyxa, S.aureus, S.epidermidis) but not Actinobacteria M.luteus or Gram-negative P.aeruginosa or K.pneumoniae. SDP induces expression of the sdpR-sdpI operon. Its maturation is dependent on SdpA and SdpB. Also functions as a ligand, binds to SdpI triggering a signal transduction cascade that protects the cell against the toxic effects of its own SDP. The protein is Sporulation delaying protein C of Bacillus subtilis (strain 168).